We begin with the raw amino-acid sequence, 267 residues long: 3-deoxy-manno-octulosonate cytidylyltransferase 2 (267 aa).

It belongs to the KdsB family.

The protein localises to the cytoplasm. It carries out the reaction 3-deoxy-alpha-D-manno-oct-2-ulosonate + CTP = CMP-3-deoxy-beta-D-manno-octulosonate + diphosphate. It functions in the pathway nucleotide-sugar biosynthesis; CMP-3-deoxy-D-manno-octulosonate biosynthesis; CMP-3-deoxy-D-manno-octulosonate from 3-deoxy-D-manno-octulosonate and CTP: step 1/1. It participates in bacterial outer membrane biogenesis; lipopolysaccharide biosynthesis. Functionally, activates KDO (a required 8-carbon sugar) for incorporation into bacterial lipopolysaccharide in Gram-negative bacteria. The chain is 3-deoxy-manno-octulosonate cytidylyltransferase 2 from Burkholderia ambifaria (strain MC40-6).